Consider the following 103-residue polypeptide: Large ribosomal subunit protein bL21 (103 aa).

The protein belongs to the bacterial ribosomal protein bL21 family. Part of the 50S ribosomal subunit. Contacts protein L20.

Its function is as follows. This protein binds to 23S rRNA in the presence of protein L20. This is Large ribosomal subunit protein bL21 from Pectobacterium atrosepticum (strain SCRI 1043 / ATCC BAA-672) (Erwinia carotovora subsp. atroseptica).